A 336-amino-acid polypeptide reads, in one-letter code: 4-hydroxy-2-oxovalerate aldolase (336 aa).

In terms of domain architecture, Pyruvate carboxyltransferase spans 5–255 (IRIIDSTLRD…ETGVDLYKIM (251 aa)). A substrate-binding site is contributed by 13–14 (RD). Residue Asp14 coordinates Mn(2+). His17 (proton acceptor) is an active-site residue. Ser167 and His194 together coordinate substrate. Residues His194 and His196 each coordinate Mn(2+). A substrate-binding site is contributed by Tyr285.

Belongs to the 4-hydroxy-2-oxovalerate aldolase family.

The catalysed reaction is (S)-4-hydroxy-2-oxopentanoate = acetaldehyde + pyruvate. This Carboxydothermus hydrogenoformans (strain ATCC BAA-161 / DSM 6008 / Z-2901) protein is 4-hydroxy-2-oxovalerate aldolase (mhpE).